The following is a 303-amino-acid chain: Siderophore enterobactin esterase (303 aa).

It belongs to the esterase D family. Homodimer.

The catalysed reaction is enterobactin + 3 H2O = 3 N-(2,3-dihydroxybenzoyl)-L-serine + 2 H(+). Its function is as follows. Displays specific enterobactin (ENB) esterase activity required for intracellular release of iron. Enterobactin is a xenosiderophore that is selectively produced by Gram-negative Enterobacteriaceae. The affinity for enterobactin is quite high, potentially due to the low natural abundance of this xenosiderophore in fungal habitats. Does not hydrolyze triacetylfusarinine C (TAFC). The chain is Siderophore enterobactin esterase from Emericella nidulans (strain FGSC A4 / ATCC 38163 / CBS 112.46 / NRRL 194 / M139) (Aspergillus nidulans).